Consider the following 194-residue polypeptide: Chromophore lyase CpcT/CpeT 1 (194 aa).

It belongs to the CpcT/CpeT biliprotein lyase family.

Its function is as follows. Covalently attaches a chromophore to Cys residue(s) of phycobiliproteins. This Microcystis aeruginosa (strain NIES-843 / IAM M-2473) protein is Chromophore lyase CpcT/CpeT 1.